The primary structure comprises 218 residues: Elongation factor Ts (218 aa).

The interval 82-85 (TDFV) is involved in Mg(2+) ion dislocation from EF-Tu.

Belongs to the EF-Ts family.

The protein resides in the cytoplasm. Functionally, associates with the EF-Tu.GDP complex and induces the exchange of GDP to GTP. It remains bound to the aminoacyl-tRNA.EF-Tu.GTP complex up to the GTP hydrolysis stage on the ribosome. The protein is Elongation factor Ts of Prochlorococcus marinus (strain MIT 9313).